A 299-amino-acid chain; its full sequence is Ribosome-inactivating protein saporin-6 (299 aa).

The first 24 residues, 1 to 24 (MKIYVVATIAWILLQFSAWTTTDA), serve as a signal peptide directing secretion. The active site involves glutamate 200. Positions 278 to 299 (SSNEANSTVRHYGPLKPTLLIT) are excised as a propeptide. A glycan (N-linked (GlcNAc...) asparagine) is linked at asparagine 283.

The protein belongs to the ribosome-inactivating protein family. Type 1 RIP subfamily. As to expression, seeds and leaves of the plant.

The catalysed reaction is Endohydrolysis of the N-glycosidic bond at one specific adenosine on the 28S rRNA.. In terms of biological role, ribosome-inactivating protein of type 1, inhibits protein synthesis in animal cells. Useful as immunotoxin for pharmacological applications. The polypeptide is Ribosome-inactivating protein saporin-6 (SAP6) (Saponaria officinalis (Common soapwort)).